A 299-amino-acid polypeptide reads, in one-letter code: ATP phosphoribosyltransferase (299 aa).

The protein belongs to the ATP phosphoribosyltransferase family. Long subfamily. As to quaternary structure, equilibrium between an active dimeric form, an inactive hexameric form and higher aggregates. Interconversion between the various forms is largely reversible and is influenced by the natural substrates and inhibitors of the enzyme. Mg(2+) is required as a cofactor.

Its subcellular location is the cytoplasm. It carries out the reaction 1-(5-phospho-beta-D-ribosyl)-ATP + diphosphate = 5-phospho-alpha-D-ribose 1-diphosphate + ATP. It participates in amino-acid biosynthesis; L-histidine biosynthesis; L-histidine from 5-phospho-alpha-D-ribose 1-diphosphate: step 1/9. With respect to regulation, feedback inhibited by histidine. Catalyzes the condensation of ATP and 5-phosphoribose 1-diphosphate to form N'-(5'-phosphoribosyl)-ATP (PR-ATP). Has a crucial role in the pathway because the rate of histidine biosynthesis seems to be controlled primarily by regulation of HisG enzymatic activity. The sequence is that of ATP phosphoribosyltransferase from Serratia proteamaculans (strain 568).